Consider the following 100-residue polypeptide: Large ribosomal subunit protein uL23 (100 aa).

Belongs to the universal ribosomal protein uL23 family. Part of the 50S ribosomal subunit. Contacts protein L29, and trigger factor when it is bound to the ribosome.

Its function is as follows. One of the early assembly proteins it binds 23S rRNA. One of the proteins that surrounds the polypeptide exit tunnel on the outside of the ribosome. Forms the main docking site for trigger factor binding to the ribosome. In Shewanella halifaxensis (strain HAW-EB4), this protein is Large ribosomal subunit protein uL23.